The primary structure comprises 288 residues: Homoserine kinase (288 aa).

Pro79 to Ala89 is an ATP binding site.

This sequence belongs to the GHMP kinase family. Homoserine kinase subfamily.

Its subcellular location is the cytoplasm. It carries out the reaction L-homoserine + ATP = O-phospho-L-homoserine + ADP + H(+). It participates in amino-acid biosynthesis; L-threonine biosynthesis; L-threonine from L-aspartate: step 4/5. Functionally, catalyzes the ATP-dependent phosphorylation of L-homoserine to L-homoserine phosphate. The polypeptide is Homoserine kinase (Listeria innocua serovar 6a (strain ATCC BAA-680 / CLIP 11262)).